The primary structure comprises 93 residues: MRTVPLFAACLLLTLMAQAEPLPRAADHSDTKMKGDREDHVAVISFWEEESTSLQDAGAGAGRRCICTTRTCRFPYRRLGTCIFQNRVYTFCC.

Positions 1–19 (MRTVPLFAACLLLTLMAQA) are cleaved as a signal peptide. The propeptide occupies 20–62 (EPLPRAADHSDTKMKGDREDHVAVISFWEEESTSLQDAGAGAG). 3 disulfides stabilise this stretch: cysteine 65-cysteine 93, cysteine 67-cysteine 82, and cysteine 72-cysteine 92.

Belongs to the alpha-defensin family. As to expression, bone marrow.

The protein localises to the secreted. In terms of biological role, has antibiotic, anti-fungi and antiviral activity. The protein is Neutrophil cationic peptide 1 type B of Cavia porcellus (Guinea pig).